A 169-amino-acid chain; its full sequence is ATP synthase subunit b (169 aa).

A helical membrane pass occupies residues 12–32; the sequence is PSVGLIFWKTVAFLIFLYILY. The segment at 69 to 107 is disordered; the sequence is AENEEARREAEQKAQQILREARDSAEELREEEKAKTRRE. Over residues 87–107 the composition is skewed to basic and acidic residues; sequence REARDSAEELREEEKAKTRRE.

This sequence belongs to the ATPase B chain family. As to quaternary structure, F-type ATPases have 2 components, F(1) - the catalytic core - and F(0) - the membrane proton channel. F(1) has five subunits: alpha(3), beta(3), gamma(1), delta(1), epsilon(1). F(0) has three main subunits: a(1), b(2) and c(10-14). The alpha and beta chains form an alternating ring which encloses part of the gamma chain. F(1) is attached to F(0) by a central stalk formed by the gamma and epsilon chains, while a peripheral stalk is formed by the delta and b chains.

The protein resides in the cell inner membrane. F(1)F(0) ATP synthase produces ATP from ADP in the presence of a proton or sodium gradient. F-type ATPases consist of two structural domains, F(1) containing the extramembraneous catalytic core and F(0) containing the membrane proton channel, linked together by a central stalk and a peripheral stalk. During catalysis, ATP synthesis in the catalytic domain of F(1) is coupled via a rotary mechanism of the central stalk subunits to proton translocation. In terms of biological role, component of the F(0) channel, it forms part of the peripheral stalk, linking F(1) to F(0). The protein is ATP synthase subunit b of Salinibacter ruber (strain DSM 13855 / M31).